A 562-amino-acid chain; its full sequence is 2-succinyl-5-enolpyruvyl-6-hydroxy-3-cyclohexene-1-carboxylate synthase (562 aa).

Belongs to the TPP enzyme family. MenD subfamily. Homodimer. Requires Mg(2+) as cofactor. Mn(2+) is required as a cofactor. The cofactor is thiamine diphosphate.

It catalyses the reaction isochorismate + 2-oxoglutarate + H(+) = 5-enolpyruvoyl-6-hydroxy-2-succinyl-cyclohex-3-ene-1-carboxylate + CO2. Its pathway is quinol/quinone metabolism; 1,4-dihydroxy-2-naphthoate biosynthesis; 1,4-dihydroxy-2-naphthoate from chorismate: step 2/7. It functions in the pathway cofactor biosynthesis; phylloquinone biosynthesis. Its function is as follows. Catalyzes the thiamine diphosphate-dependent decarboxylation of 2-oxoglutarate and the subsequent addition of the resulting succinic semialdehyde-thiamine pyrophosphate anion to isochorismate to yield 2-succinyl-5-enolpyruvyl-6-hydroxy-3-cyclohexene-1-carboxylate (SEPHCHC). The polypeptide is 2-succinyl-5-enolpyruvyl-6-hydroxy-3-cyclohexene-1-carboxylate synthase (Thermosynechococcus vestitus (strain NIES-2133 / IAM M-273 / BP-1)).